The primary structure comprises 337 residues: Ribosomal RNA small subunit methyltransferase C (337 aa).

The protein belongs to the methyltransferase superfamily. RsmC family. As to quaternary structure, monomer.

It is found in the cytoplasm. The enzyme catalyses guanosine(1207) in 16S rRNA + S-adenosyl-L-methionine = N(2)-methylguanosine(1207) in 16S rRNA + S-adenosyl-L-homocysteine + H(+). Specifically methylates the guanine in position 1207 of 16S rRNA in the 30S particle. In Acinetobacter baumannii (strain ACICU), this protein is Ribosomal RNA small subunit methyltransferase C.